Here is a 226-residue protein sequence, read N- to C-terminus: Protein TRI1 (226 aa).

The DEK-C domain maps to 1–56 (MADINKYIPMVDAILSVSNPDEISPKRVRKALQILYSVNLDSQRKLINELILERFG). The interval 83–118 (QKEEERPLRSTRKRKGKSESKSKRKKKKNDSPDSNS) is disordered. Residues 91 to 110 (RSTRKRKGKSESKSKRKKKK) show a composition bias toward basic residues. S113 bears the Phosphoserine mark. An SWIB/MDM2 domain is found at 119-195 (ISVRKVLLSA…NKLLTKHLFN (77 aa)). A compositionally biased stretch (basic and acidic residues) spans 200–218 (VKHEEEQKQTPEKEIKLEN). Residues 200–226 (VKHEEEQKQTPEKEIKLENESLPNLSG) form a disordered region. Residues K201 and K215 each participate in a glycyl lysine isopeptide (Lys-Gly) (interchain with G-Cter in SUMO) cross-link. At S225 the chain carries Phosphoserine.

The protein localises to the cytoplasm. It is found in the nucleus. The protein resides in the nucleolus. Its function is as follows. May be involved in transcription regulation. This chain is Protein TRI1 (TRI1), found in Saccharomyces cerevisiae (strain ATCC 204508 / S288c) (Baker's yeast).